The following is a 126-amino-acid chain: Phosphoribosyl-AMP cyclohydrolase (126 aa).

Mg(2+) is bound at residue D76. C77 is a Zn(2+) binding site. The Mg(2+) site is built by D78 and D80. Residues C94 and C101 each coordinate Zn(2+).

This sequence belongs to the PRA-CH family. As to quaternary structure, homodimer. Mg(2+) is required as a cofactor. The cofactor is Zn(2+).

The protein resides in the cytoplasm. The enzyme catalyses 1-(5-phospho-beta-D-ribosyl)-5'-AMP + H2O = 1-(5-phospho-beta-D-ribosyl)-5-[(5-phospho-beta-D-ribosylamino)methylideneamino]imidazole-4-carboxamide. The protein operates within amino-acid biosynthesis; L-histidine biosynthesis; L-histidine from 5-phospho-alpha-D-ribose 1-diphosphate: step 3/9. In terms of biological role, catalyzes the hydrolysis of the adenine ring of phosphoribosyl-AMP. The chain is Phosphoribosyl-AMP cyclohydrolase from Ruthia magnifica subsp. Calyptogena magnifica.